The chain runs to 249 residues: Ribosomal RNA small subunit methyltransferase G (249 aa).

S-adenosyl-L-methionine is bound by residues G86, F91, and R178.

It belongs to the methyltransferase superfamily. RNA methyltransferase RsmG family.

Its subcellular location is the cytoplasm. Specifically methylates the N7 position of a guanine in 16S rRNA. This chain is Ribosomal RNA small subunit methyltransferase G, found in Bifidobacterium adolescentis (strain ATCC 15703 / DSM 20083 / NCTC 11814 / E194a).